Here is a 339-residue protein sequence, read N- to C-terminus: Uricase (339 aa).

Active-site charge relay system residues include lysine 33 and threonine 78. Residues threonine 78, aspartate 79, phenylalanine 201, arginine 218, valine 266, glutamine 267, and asparagine 293 each contribute to the urate site. Histidine 295 functions as the Charge relay system in the catalytic mechanism. Residues 337–339 (SHL) carry the Microbody targeting signal motif.

It belongs to the uricase family.

Its subcellular location is the peroxisome. It catalyses the reaction urate + O2 + H2O = 5-hydroxyisourate + H2O2. It participates in purine metabolism; urate degradation; (S)-allantoin from urate: step 1/3. Its function is as follows. Catalyzes the oxidation of uric acid to 5-hydroxyisourate, which is further processed to form (S)-allantoin. This chain is Uricase (Uro), found in Drosophila subobscura (Fruit fly).